The following is a 306-amino-acid chain: Plant-type L-asparaginase (306 aa).

Threonine 176 serves as the catalytic Nucleophile. Substrate is bound by residues 203 to 206 (RVGD) and 225 to 228 (TGLG).

It belongs to the Ntn-hydrolase family. Heterotetramer of two alpha and two beta chains arranged as a dimer of alpha/beta heterodimers. Autocleaved. Generates the alpha and beta subunits. The N-terminal residue of the beta subunit is thought to be responsible for the nucleophile hydrolase activity.

It catalyses the reaction L-asparagine + H2O = L-aspartate + NH4(+). Catalyzes the hydrolysis of L-asparagine into L-aspartate and ammonia. The protein is Plant-type L-asparaginase of Pyrococcus furiosus (strain ATCC 43587 / DSM 3638 / JCM 8422 / Vc1).